The chain runs to 62 residues: DNA-directed RNA polymerase subunit omega (62 aa).

Belongs to the RNA polymerase subunit omega family. In terms of assembly, the RNAP catalytic core consists of 2 alpha, 1 beta, 1 beta' and 1 omega subunit. When a sigma factor is associated with the core the holoenzyme is formed, which can initiate transcription.

The enzyme catalyses RNA(n) + a ribonucleoside 5'-triphosphate = RNA(n+1) + diphosphate. Functionally, promotes RNA polymerase assembly. Latches the N- and C-terminal regions of the beta' subunit thereby facilitating its interaction with the beta and alpha subunits. This is DNA-directed RNA polymerase subunit omega from Wigglesworthia glossinidia brevipalpis.